Here is an 83-residue protein sequence, read N- to C-terminus: Sulfur carrier protein TusA (83 aa).

The active-site Cysteine persulfide intermediate is cysteine 19.

The protein belongs to the sulfur carrier protein TusA family.

The protein resides in the cytoplasm. Functionally, sulfur carrier protein which probably makes part of a sulfur-relay system. This chain is Sulfur carrier protein TusA, found in Aliivibrio salmonicida (strain LFI1238) (Vibrio salmonicida (strain LFI1238)).